The chain runs to 162 residues: 2-C-methyl-D-erythritol 2,4-cyclodiphosphate synthase (162 aa).

Positions 12 and 14 each coordinate a divalent metal cation. Residues 12 to 14 and 38 to 39 each bind 4-CDP-2-C-methyl-D-erythritol 2-phosphate; these read DVH and HS. His46 lines the a divalent metal cation pocket. Residues 60–62, 65–69, and Arg146 contribute to the 4-CDP-2-C-methyl-D-erythritol 2-phosphate site; these read DIG and FPDTD.

The protein belongs to the IspF family. In terms of assembly, homotrimer. A divalent metal cation serves as cofactor.

It carries out the reaction 4-CDP-2-C-methyl-D-erythritol 2-phosphate = 2-C-methyl-D-erythritol 2,4-cyclic diphosphate + CMP. It participates in isoprenoid biosynthesis; isopentenyl diphosphate biosynthesis via DXP pathway; isopentenyl diphosphate from 1-deoxy-D-xylulose 5-phosphate: step 4/6. Functionally, involved in the biosynthesis of isopentenyl diphosphate (IPP) and dimethylallyl diphosphate (DMAPP), two major building blocks of isoprenoid compounds. Catalyzes the conversion of 4-diphosphocytidyl-2-C-methyl-D-erythritol 2-phosphate (CDP-ME2P) to 2-C-methyl-D-erythritol 2,4-cyclodiphosphate (ME-CPP) with a corresponding release of cytidine 5-monophosphate (CMP). The polypeptide is 2-C-methyl-D-erythritol 2,4-cyclodiphosphate synthase (Bordetella bronchiseptica (strain ATCC BAA-588 / NCTC 13252 / RB50) (Alcaligenes bronchisepticus)).